Here is a 63-residue protein sequence, read N- to C-terminus: Bowman-Birk type proteinase inhibitor B-II (63 aa).

7 disulfides stabilise this stretch: Cys5/Cys62, Cys6/Cys23, Cys9/Cys57, Cys11/Cys21, Cys30/Cys37, Cys34/Cys49, and Cys39/Cys47.

Belongs to the Bowman-Birk serine protease inhibitor family.

This Arachis hypogaea (Peanut) protein is Bowman-Birk type proteinase inhibitor B-II.